Here is a 210-residue protein sequence, read N- to C-terminus: NADH dehydrogenase [ubiquinone] iron-sulfur protein 8, mitochondrial (210 aa).

Residues 1–34 (MRCLTMPTLLRALAQAAHTGPPGGRTLHSSAVAA) constitute a mitochondrion transit peptide. 4Fe-4S ferredoxin-type domains lie at 102-131 (RRYP…IEAE) and 141-170 (TRYD…EGPN). [4Fe-4S] cluster-binding residues include C111, C114, C117, C121, C150, C153, C156, and C160.

It belongs to the complex I 23 kDa subunit family. As to quaternary structure, core subunit of respiratory chain NADH dehydrogenase (Complex I) which is composed of 45 different subunits. This is a component of the iron-sulfur (IP) fragment of the enzyme. Interacts with RAB5IF. [4Fe-4S] cluster serves as cofactor.

It localises to the mitochondrion inner membrane. The catalysed reaction is a ubiquinone + NADH + 5 H(+)(in) = a ubiquinol + NAD(+) + 4 H(+)(out). Core subunit of the mitochondrial membrane respiratory chain NADH dehydrogenase (Complex I) which catalyzes electron transfer from NADH through the respiratory chain, using ubiquinone as an electron acceptor. Essential for the catalytic activity and assembly of complex I. This Macaca fascicularis (Crab-eating macaque) protein is NADH dehydrogenase [ubiquinone] iron-sulfur protein 8, mitochondrial (NDUFS8).